The chain runs to 137 residues: Large ribosomal subunit protein uL16 (137 aa).

Belongs to the universal ribosomal protein uL16 family. Part of the 50S ribosomal subunit.

Its function is as follows. Binds 23S rRNA and is also seen to make contacts with the A and possibly P site tRNAs. This chain is Large ribosomal subunit protein uL16, found in Ectopseudomonas mendocina (strain ymp) (Pseudomonas mendocina).